The primary structure comprises 225 residues: Enolase-phosphatase E1 (225 aa).

Belongs to the HAD-like hydrolase superfamily. MasA/MtnC family. Monomer. Mg(2+) serves as cofactor.

It carries out the reaction 5-methylsulfanyl-2,3-dioxopentyl phosphate + H2O = 1,2-dihydroxy-5-(methylsulfanyl)pent-1-en-3-one + phosphate. The protein operates within amino-acid biosynthesis; L-methionine biosynthesis via salvage pathway; L-methionine from S-methyl-5-thio-alpha-D-ribose 1-phosphate: step 3/6. It participates in amino-acid biosynthesis; L-methionine biosynthesis via salvage pathway; L-methionine from S-methyl-5-thio-alpha-D-ribose 1-phosphate: step 4/6. In terms of biological role, bifunctional enzyme that catalyzes the enolization of 2,3-diketo-5-methylthiopentyl-1-phosphate (DK-MTP-1-P) into the intermediate 2-hydroxy-3-keto-5-methylthiopentenyl-1-phosphate (HK-MTPenyl-1-P), which is then dephosphorylated to form the acireductone 1,2-dihydroxy-3-keto-5-methylthiopentene (DHK-MTPene). The protein is Enolase-phosphatase E1 of Shewanella halifaxensis (strain HAW-EB4).